Consider the following 156-residue polypeptide: Transcription antitermination protein NusB (156 aa).

This sequence belongs to the NusB family.

Functionally, involved in transcription antitermination. Required for transcription of ribosomal RNA (rRNA) genes. Binds specifically to the boxA antiterminator sequence of the ribosomal RNA (rrn) operons. This is Transcription antitermination protein NusB from Mycolicibacterium paratuberculosis (strain ATCC BAA-968 / K-10) (Mycobacterium paratuberculosis).